The sequence spans 323 residues: ATP synthase gamma chain (323 aa).

This sequence belongs to the ATPase gamma chain family. In terms of assembly, F-type ATPases have 2 components, CF(1) - the catalytic core - and CF(0) - the membrane proton channel. CF(1) has five subunits: alpha(3), beta(3), gamma(1), delta(1), epsilon(1). CF(0) has three main subunits: a, b and c.

It is found in the cell membrane. Its function is as follows. Produces ATP from ADP in the presence of a proton gradient across the membrane. The gamma chain is believed to be important in regulating ATPase activity and the flow of protons through the CF(0) complex. This Nocardia farcinica (strain IFM 10152) protein is ATP synthase gamma chain.